Here is a 99-residue protein sequence, read N- to C-terminus: Small ribosomal subunit protein bS6 (99 aa).

This sequence belongs to the bacterial ribosomal protein bS6 family.

In terms of biological role, binds together with bS18 to 16S ribosomal RNA. The protein is Small ribosomal subunit protein bS6 of Lactiplantibacillus plantarum (strain ATCC BAA-793 / NCIMB 8826 / WCFS1) (Lactobacillus plantarum).